The sequence spans 309 residues: MKKLFILAGPTAVGKTDISIEVAKKIDGEIISADSMQIYKYMNIGSAKITKGEMQEIPHYLIDIIDPKENFNVSRYKNLAEKTIEDIYSRNKFPMLVGGTGLYINSLICNYDFTDAKVDVNYRNYLENLAKVQGREYVHSLLKDIDAVSYERLYPNDLKRVVRALEVHKLTGKTIGEFNSKDSLYDIPYKIYYFVLNMDRVKLYERINKRVDLMIEQGLIDEVKNLRSMGYTKDMQSMKGIGYKELIRYLEGDISLDEAVYLIKKGSRNYAKRQLTWFRKDERVIWVNKDEFTSNKEIVNYIINTLVTC.

Residue 9–16 (GPTAVGKT) coordinates ATP. 11 to 16 (TAVGKT) contributes to the substrate binding site. Residues 34-37 (DSMQ) form an interaction with substrate tRNA region.

This sequence belongs to the IPP transferase family. Monomer. The cofactor is Mg(2+).

The catalysed reaction is adenosine(37) in tRNA + dimethylallyl diphosphate = N(6)-dimethylallyladenosine(37) in tRNA + diphosphate. Its function is as follows. Catalyzes the transfer of a dimethylallyl group onto the adenine at position 37 in tRNAs that read codons beginning with uridine, leading to the formation of N6-(dimethylallyl)adenosine (i(6)A). The protein is tRNA dimethylallyltransferase of Clostridium kluyveri (strain NBRC 12016).